Here is a 197-residue protein sequence, read N- to C-terminus: Imidazoleglycerol-phosphate dehydratase (197 aa).

This sequence belongs to the imidazoleglycerol-phosphate dehydratase family.

The protein resides in the cytoplasm. The catalysed reaction is D-erythro-1-(imidazol-4-yl)glycerol 3-phosphate = 3-(imidazol-4-yl)-2-oxopropyl phosphate + H2O. It functions in the pathway amino-acid biosynthesis; L-histidine biosynthesis; L-histidine from 5-phospho-alpha-D-ribose 1-diphosphate: step 6/9. The polypeptide is Imidazoleglycerol-phosphate dehydratase (Nitrosococcus oceani (strain ATCC 19707 / BCRC 17464 / JCM 30415 / NCIMB 11848 / C-107)).